The primary structure comprises 487 residues: MKRLSELAFDNRFARLGDTFSTAVTPLPIASPRLVVASPAALALLDLEPAVADDPQLVEYCAGQCPWPGAEPRAMAYSGHQFGFYNPQLGDGRGLLLGEVINAAGERWDLHLKGAGKTPYSRMGDGRAVLRSSIREFLASEHLHALGIPTSRALCVTASDTPVWRETEERAATLLRLAPSHVRFGHFEFFYYSRQHEALRQLLDYVIGEYFADCLAQPDPYRAFFDRVLERTAALLARWQAYGFCHGVMNTDNMSILGITFDFGPYAFLDDFDPGFVCNHSDDTGRYSFDNQVPIAHWNLSALGQALTPFVDKDALLGSLKRFLPLFRGAWLELMRRRLGFTTAEADDRERIQRLLQLMQGSAVDYSRFFRELGDRPAAAALRRLREDFVDLAGFDAWAGDHLARLARENEADEAARRARMHAVNPKYILRNYLAQQAIEAAERGDYSPVRELHAVLSRPFDEQPGMERYAERPPEWGKHLEISCSS.

Residues Gly-90, Gly-92, Arg-93, Lys-113, Asp-125, Gly-126, Arg-176, and Arg-183 each contribute to the ATP site. The Proton acceptor role is filled by Asp-252. Residues Asn-253 and Asp-262 each contribute to the Mg(2+) site. Asp-262 provides a ligand contact to ATP.

Belongs to the SELO family. The cofactor is Mg(2+). Mn(2+) is required as a cofactor.

It carries out the reaction L-seryl-[protein] + ATP = 3-O-(5'-adenylyl)-L-seryl-[protein] + diphosphate. The catalysed reaction is L-threonyl-[protein] + ATP = 3-O-(5'-adenylyl)-L-threonyl-[protein] + diphosphate. The enzyme catalyses L-tyrosyl-[protein] + ATP = O-(5'-adenylyl)-L-tyrosyl-[protein] + diphosphate. It catalyses the reaction L-histidyl-[protein] + UTP = N(tele)-(5'-uridylyl)-L-histidyl-[protein] + diphosphate. It carries out the reaction L-seryl-[protein] + UTP = O-(5'-uridylyl)-L-seryl-[protein] + diphosphate. The catalysed reaction is L-tyrosyl-[protein] + UTP = O-(5'-uridylyl)-L-tyrosyl-[protein] + diphosphate. In terms of biological role, nucleotidyltransferase involved in the post-translational modification of proteins. It can catalyze the addition of adenosine monophosphate (AMP) or uridine monophosphate (UMP) to a protein, resulting in modifications known as AMPylation and UMPylation. This Azotobacter vinelandii (strain DJ / ATCC BAA-1303) protein is Protein nucleotidyltransferase YdiU.